Reading from the N-terminus, the 1168-residue chain is Homeodomain-interacting protein kinase 2 (1168 aa).

Phosphoserine is present on S16. A Glycyl lysine isopeptide (Lys-Gly) (interchain with G-Cter in SUMO); alternate cross-link involves residue K32. K32 is covalently cross-linked (Glycyl lysine isopeptide (Lys-Gly) (interchain with G-Cter in SUMO2); alternate). The interval 97–230 (SASSTSVTGQ…TNEIVAIKIL (134 aa)) is transcriptional corepression. S118 and S135 each carry phosphoserine. A Phosphothreonine modification is found at T141. The tract at residues 189–520 (HEVLCSMTNT…DADKRITPIE (332 aa)) is interaction with DAXX. The Protein kinase domain maps to 199 to 527 (YEVLEFLGRG…PIETLNHPFV (329 aa)). ATP-binding positions include 205–213 (LGRGTFGQV) and K228. T252 and T273 each carry phosphothreonine. Catalysis depends on D324, which acts as the Proton acceptor. Y361 carries the phosphotyrosine modification. The residue at position 441 (S441) is a Phosphoserine. Residues T482, T517, and T566 each carry the phosphothreonine modification. Residues 539–816 (THVKSCFQNM…KENTPPRCAM (278 aa)) form an interaction with SKI and SMAD1 region. Residues 595–772 (PSAASMAAVA…MRQQPTSTTS (178 aa)) are interaction with DAZAP2. 2 positions are modified to phosphoserine: S607 and S641. Position 660 is a phosphothreonine (T660). Positions 724-869 (RNTHAHGSHY…ITISSDTDEE (146 aa)) are interaction with POU4F1. An interaction with CTBP1 region spans residues 746–848 (HVTLPAAQPL…TRERQRQTIV (103 aa)). An interaction with HMGA1 region spans residues 759 to 869 (VAHVMRQQPT…ITISSDTDEE (111 aa)). A disordered region spans residues 764 to 820 (RQQPTSTTSSRKSKQHQPSMRNVSTCEVTSSQSTSSPQRSKRVKENTPPRCAMVHSS). A compositionally biased stretch (polar residues) spans 765-791 (QQPTSTTSSRKSKQHQPSMRNVSTCEV). The short motif at 774-777 (RKSK) is the Nuclear localization signal 1 (NLS1) element. 2 positions are modified to phosphoserine: S787 and S799. The span at 792–801 (TSSQSTSSPQ) shows a compositional bias: low complexity. A Nuclear localization signal 2 (NLS2) motif is present at residues 804–807 (KRVK). The segment at 812-907 (PRCAMVHSSP…YSDSSSNTSP (96 aa)) is interaction with TP53 and TP73. An interaction with UBE2I region spans residues 845–879 (QTIVIPDTPSPTVSVITISSDTDEEEEQKHAPTST). The interval 845 to 952 (QTIVIPDTPS…PLKTQASEVL (108 aa)) is localization to nuclear speckles. The tract at residues 845-952 (QTIVIPDTPS…PLKTQASEVL (108 aa)) is required for localization to nuclear speckles. The interaction with UBL1 stretch occupies residues 854 to 876 (SPTVSVITISSDTDEEEEQKHAP). Positions 856–880 (TVSVITISSDTDEEEEQKHAPTSTV) are SUMO interaction motifs (SIM); required for nuclear localization and kinase activity. The tract at residues 894 to 936 (HDSPYSDSSSNTSPYSVQQRTGHNGTNTLDTKGALENHCTGNP) is disordered. The segment covering 895–909 (DSPYSDSSSNTSPYS) has biased composition (low complexity). S906 bears the Phosphoserine mark. The interaction with AXIN1 stretch occupies residues 907-1022 (PYSVQQRTGH…LSQAQPHMAT (116 aa)). Residues 910–923 (VQQRTGHNGTNTLD) show a composition bias toward polar residues. Residues K925 and K945 each participate in a glycyl lysine isopeptide (Lys-Gly) (interchain with G-Cter in SUMO2) cross-link. An autoinhibitory domain (AID) region spans residues 956 to 1168 (DSLGPAVSTG…PAKVNQYPYI (213 aa)). The tract at residues 960 to 1030 (PAVSTGHHSS…ATDRTGSHRR (71 aa)) is disordered. S963 carries the post-translational modification Phosphoserine. Low complexity-rich tracts occupy residues 965–991 (GHHS…GSSS) and 998–1018 (QQRP…QAQP). Phosphoserine is present on residues S1014, S1125, and S1158. A Glycyl lysine isopeptide (Lys-Gly) (interchain with G-Cter in SUMO) cross-link involves residue K1161.

Belongs to the protein kinase superfamily. CMGC Ser/Thr protein kinase family. HIPK subfamily. Interacts with CREB1, SIAH1, WSB1, CBX4, TRADD, p53/TP53, TP73, TP63, CREBBP, DAXX, P53DINP1, SKI, SMAD1, SMAD2 and SMAD3, but not SMAD4. Interacts with ATF1, PML, RUNX1, EP300, NKX1-2, NKX2-5, UBE2I, HMGA1, CTBP1, AXIN1, NLK, MYB, POU4F1, POU4F2, POU4F3, UBE2I, UBL1 and ZBTB4. Probably part of a complex consisting of p53/TP53, HIPK2 and AXIN1. Interacts with SP100; positively regulates TP53-dependent transcription. Interacts with DAZAP2; the interaction results in phosphorylation of DAZAP2 which causes localization of DAZAP2 to the nucleus, reduces interaction of DAZAP2 with HIPK2 and prevents DAZAP2-dependent degradation of HIPK2. Interacts with SIAH1; the interaction is promoted by DAZAP2 and results in SIAH1-mediated ubiquitination and subsequent proteasomal degradation of HIPK2. In terms of processing, autophosphorylation at Tyr-361 in the activation loop activates the kinase and promotes nuclear localization. Post-translationally, sumoylated. When conjugated it is directed to nuclear speckles. Desumoylated by SENP1. Sumoylation on Lys-32 is promoted by the E3 SUMO-protein ligase CBX4. Ubiquitinated by FBXO3, WSB1 and SIAH1, leading to rapid proteasome-dependent degradation. The degradation mediated by FBXO3, but not ubiquitination, is prevented in the presence of PML. The degradation mediated by WSB1 and SIAH1 is reversibly reduced upon DNA damage. In terms of processing, cleaved at Asp-895 and Asp-956 by CASP6 in a p53/TP53-dependent manner. The cleaved form lacks the autoinhibitory C-terminal domain (AID), resulting in a hyperactive kinase, which potentiates p53/TP53 Ser-46 phosphorylation and subsequent activation of the cell death machinery.

It localises to the nucleus. It is found in the PML body. The protein resides in the cytoplasm. It carries out the reaction L-seryl-[protein] + ATP = O-phospho-L-seryl-[protein] + ADP + H(+). The enzyme catalyses L-threonyl-[protein] + ATP = O-phospho-L-threonyl-[protein] + ADP + H(+). In terms of biological role, serine/threonine-protein kinase involved in transcription regulation, p53/TP53-mediated cellular apoptosis and regulation of the cell cycle. Acts as a corepressor of several transcription factors, including SMAD1 and POU4F1/Brn3a and probably NK homeodomain transcription factors. Phosphorylates PDX1, ATF1, PML, p53/TP53, CREB1, CTBP1, CBX4, RUNX1, EP300, CTNNB1, HMGA1, ZBTB4 and DAZAP2. Inhibits cell growth and promotes apoptosis through the activation of p53/TP53 both at the transcription level and at the protein level (by phosphorylation and indirect acetylation). The phosphorylation of p53/TP53 may be mediated by a p53/TP53-HIPK2-AXIN1 complex. Involved in the response to hypoxia by acting as a transcriptional co-suppressor of HIF1A. Mediates transcriptional activation of TP73. In response to TGFB, cooperates with DAXX to activate JNK. Negative regulator through phosphorylation and subsequent proteasomal degradation of CTNNB1 and the antiapoptotic factor CTBP1. In the Wnt/beta-catenin signaling pathway acts as an intermediate kinase between MAP3K7/TAK1 and NLK to promote the proteasomal degradation of MYB. Phosphorylates CBX4 upon DNA damage and promotes its E3 SUMO-protein ligase activity. Activates CREB1 and ATF1 transcription factors by phosphorylation in response to genotoxic stress. In response to DNA damage, stabilizes PML by phosphorylation. PML, HIPK2 and FBXO3 may act synergically to activate p53/TP53-dependent transactivation. Promotes angiogenesis, and is involved in erythroid differentiation, especially during fetal liver erythropoiesis. Phosphorylation of RUNX1 and EP300 stimulates EP300 transcription regulation activity. Triggers ZBTB4 protein degradation in response to DNA damage. In response to DNA damage, phosphorylates DAZAP2 which localizes DAZAP2 to the nucleus, reduces interaction of DAZAP2 with HIPK2 and prevents DAZAP2-dependent ubiquitination of HIPK2 by E3 ubiquitin-protein ligase SIAH1 and subsequent proteasomal degradation. Modulates HMGA1 DNA-binding affinity. In response to high glucose, triggers phosphorylation-mediated subnuclear localization shifting of PDX1. Involved in the regulation of eye size, lens formation and retinal lamination during late embryogenesis. The sequence is that of Homeodomain-interacting protein kinase 2 (Hipk2) from Mesocricetus auratus (Golden hamster).